Here is a 132-residue protein sequence, read N- to C-terminus: Small ribosomal subunit protein uS8 (132 aa).

Belongs to the universal ribosomal protein uS8 family. As to quaternary structure, part of the 30S ribosomal subunit. Contacts proteins S5 and S12.

One of the primary rRNA binding proteins, it binds directly to 16S rRNA central domain where it helps coordinate assembly of the platform of the 30S subunit. The chain is Small ribosomal subunit protein uS8 from Lactobacillus johnsonii (strain CNCM I-12250 / La1 / NCC 533).